The sequence spans 234 residues: Thiamine-phosphate synthase (234 aa).

Residues 52-56 (QYRSK) and asparagine 84 each bind 4-amino-2-methyl-5-(diphosphooxymethyl)pyrimidine. Mg(2+) contacts are provided by aspartate 85 and aspartate 104. Serine 123 contributes to the 4-amino-2-methyl-5-(diphosphooxymethyl)pyrimidine binding site. A 2-[(2R,5Z)-2-carboxy-4-methylthiazol-5(2H)-ylidene]ethyl phosphate-binding site is contributed by 150–152 (SVT). Residue lysine 153 participates in 4-amino-2-methyl-5-(diphosphooxymethyl)pyrimidine binding. Residue glycine 180 coordinates 2-[(2R,5Z)-2-carboxy-4-methylthiazol-5(2H)-ylidene]ethyl phosphate.

It belongs to the thiamine-phosphate synthase family. It depends on Mg(2+) as a cofactor.

It carries out the reaction 2-[(2R,5Z)-2-carboxy-4-methylthiazol-5(2H)-ylidene]ethyl phosphate + 4-amino-2-methyl-5-(diphosphooxymethyl)pyrimidine + 2 H(+) = thiamine phosphate + CO2 + diphosphate. The enzyme catalyses 2-(2-carboxy-4-methylthiazol-5-yl)ethyl phosphate + 4-amino-2-methyl-5-(diphosphooxymethyl)pyrimidine + 2 H(+) = thiamine phosphate + CO2 + diphosphate. The catalysed reaction is 4-methyl-5-(2-phosphooxyethyl)-thiazole + 4-amino-2-methyl-5-(diphosphooxymethyl)pyrimidine + H(+) = thiamine phosphate + diphosphate. Its pathway is cofactor biosynthesis; thiamine diphosphate biosynthesis; thiamine phosphate from 4-amino-2-methyl-5-diphosphomethylpyrimidine and 4-methyl-5-(2-phosphoethyl)-thiazole: step 1/1. In terms of biological role, condenses 4-methyl-5-(beta-hydroxyethyl)thiazole monophosphate (THZ-P) and 2-methyl-4-amino-5-hydroxymethyl pyrimidine pyrophosphate (HMP-PP) to form thiamine monophosphate (TMP). The sequence is that of Thiamine-phosphate synthase from Nitrosospira multiformis (strain ATCC 25196 / NCIMB 11849 / C 71).